We begin with the raw amino-acid sequence, 67 residues long: DNA-directed RNA polymerase subunit Rpo10 (67 aa).

Positions 7, 10, 44, and 45 each coordinate Zn(2+).

It belongs to the archaeal Rpo10/eukaryotic RPB10 RNA polymerase subunit family. Part of the RNA polymerase complex. The cofactor is Zn(2+).

The protein localises to the cytoplasm. It catalyses the reaction RNA(n) + a ribonucleoside 5'-triphosphate = RNA(n+1) + diphosphate. In terms of biological role, DNA-dependent RNA polymerase (RNAP) catalyzes the transcription of DNA into RNA using the four ribonucleoside triphosphates as substrates. The sequence is that of DNA-directed RNA polymerase subunit Rpo10 from Caldivirga maquilingensis (strain ATCC 700844 / DSM 13496 / JCM 10307 / IC-167).